We begin with the raw amino-acid sequence, 361 residues long: Replication factor C subunit 3 (361 aa).

Positions 1 to 28 are enriched in low complexity; the sequence is MAGATAATPMDIDAAAPPPGAAAKGKAP. The segment at 1 to 39 is disordered; it reads MAGATAATPMDIDAAAPPPGAAAKGKAPLSSTPGGRAAP. 77-84 is an ATP binding site; the sequence is YGPPGTGK.

It belongs to the activator 1 small subunits family. In terms of assembly, heterotetramer of subunits RFC2, RFC3, RFC4 and RFC5 that can form a complex with RFC1. In terms of tissue distribution, expressed in roots, leaves, shoot apical meristem (SAM), flag leaves and panicles.

Its subcellular location is the nucleus. Its function is as follows. May be involved in DNA replication and thus regulate cell proliferation. The polypeptide is Replication factor C subunit 3 (RFC3) (Oryza sativa subsp. japonica (Rice)).